We begin with the raw amino-acid sequence, 66 residues long: DNA gyrase inhibitor YacG (66 aa).

Cysteine 10, cysteine 13, cysteine 29, and cysteine 33 together coordinate Zn(2+). The disordered stretch occupies residues 46–66 (KRIPSDVQITDSDEWSDETRY). Over residues 56 to 66 (DSDEWSDETRY) the composition is skewed to acidic residues.

This sequence belongs to the DNA gyrase inhibitor YacG family. Interacts with GyrB. The cofactor is Zn(2+).

In terms of biological role, inhibits all the catalytic activities of DNA gyrase by preventing its interaction with DNA. Acts by binding directly to the C-terminal domain of GyrB, which probably disrupts DNA binding by the gyrase. This chain is DNA gyrase inhibitor YacG, found in Sodalis glossinidius (strain morsitans).